The chain runs to 259 residues: Insulin-like growth factor-binding protein 4 (259 aa).

Residues Met1–Gly22 form the signal peptide. Residues Glu24–Leu104 enclose the IGFBP N-terminal domain. Cystine bridges form between Cys28–Cys54, Cys31–Cys56, Cys39–Cys57, Cys45–Cys60, Cys68–Cys81, and Cys75–Cys101. The disordered stretch occupies residues Gln115–Asp136. Asn126 carries N-linked (GlcNAc...) asparagine glycosylation. 4 cysteine pairs are disulfide-bonded: Cys132-Cys139, Cys175-Cys205, Cys216-Cys227, and Cys229-Cys250. In terms of domain architecture, Thyroglobulin type-1 spans Gln172–Cys250. Ser256 is subject to Phosphoserine.

Binds IGF2 more than IGF1.

The protein localises to the secreted. IGF-binding proteins prolong the half-life of the IGFs and have been shown to either inhibit or stimulate the growth promoting effects of the IGFs on cell culture. They alter the interaction of IGFs with their cell surface receptors. The sequence is that of Insulin-like growth factor-binding protein 4 (IGFBP4) from Sus scrofa (Pig).